Consider the following 429-residue polypeptide: Adenylosuccinate synthetase (429 aa).

Residues 12–18 (GDEGKGK) and 40–42 (GHT) each bind GTP. D13 (proton acceptor) is an active-site residue. Residues D13 and G40 each contribute to the Mg(2+) site. Residues 13–16 (DEGK), 38–41 (NAGH), T128, R142, Q223, T238, and R302 contribute to the IMP site. Catalysis depends on H41, which acts as the Proton donor. Substrate is bound at residue 298 to 304 (TTTGRPR). GTP is bound by residues R304, 330 to 332 (SID), and 412 to 414 (SVG).

This sequence belongs to the adenylosuccinate synthetase family. Homodimer. Mg(2+) serves as cofactor.

Its subcellular location is the cytoplasm. The catalysed reaction is IMP + L-aspartate + GTP = N(6)-(1,2-dicarboxyethyl)-AMP + GDP + phosphate + 2 H(+). It functions in the pathway purine metabolism; AMP biosynthesis via de novo pathway; AMP from IMP: step 1/2. Functionally, plays an important role in the de novo pathway of purine nucleotide biosynthesis. Catalyzes the first committed step in the biosynthesis of AMP from IMP. This Exiguobacterium sp. (strain ATCC BAA-1283 / AT1b) protein is Adenylosuccinate synthetase.